The sequence spans 153 residues: Protein E6 (153 aa).

2 zinc fingers span residues 37–73 (CHFC…CIKC) and 110–146 (CSEC…CRAC).

The protein belongs to the papillomaviridae E6 protein family. In terms of assembly, forms homodimers. Interacts with ubiquitin-protein ligase UBE3A/E6-AP; this interaction stimulates UBE3A ubiquitin activity. Interacts with host BAK1.

Its subcellular location is the host cytoplasm. It is found in the host nucleus. In terms of biological role, plays a major role in the induction and maintenance of cellular transformation. E6 associates with host UBE3A/E6-AP ubiquitin-protein ligase and modulates its activity. Protects host keratinocytes from apoptosis by mediating the degradation of host BAK1. May also inhibit host immune response. The sequence is that of Protein E6 from Micromys minutus papillomavirus (MmPV).